The sequence spans 515 residues: Cyclic AMP receptor-like protein G (515 aa).

The Extracellular segment spans residues 1-16 (MSSIIFIPNDADNINS). Residues 17–37 (IMVTISSSLSLVGCLFILSIY) form a helical membrane-spanning segment. At 38–50 (IYYKELREFQLKL) the chain is on the cytoplasmic side. A helical membrane pass occupies residues 51–71 (IFIMTINDFIISIIFLIATHI). The Extracellular portion of the chain corresponds to 72 to 92 (QTKYFDAITNVFPFFCNFPDS). A helical transmembrane segment spans residues 93–113 (LLHYFFLSSFFWEVCIAHTLI). Over 114-129 (QVIKYNNDKVEDNLKK) the chain is Cytoplasmic. The helical transmembrane segment at 130 to 150 (YFIFSNGLSALIMVSLFFIRS) threads the bilayer. Over 151-164 (YSKIDCHHDSIFPH) the chain is Extracellular. The chain crosses the membrane as a helical span at residues 165–185 (LLFFIPLLLTWIYNIIVCALL). Over 186–276 (TKTFKEQAMN…IRKTPNIIWT (91 aa)) the chain is Cytoplasmic. The helical transmembrane segment at 277–297 (SIFFLFSFGFIWSWSILVIIL) threads the bilayer. Over 298–306 (KYLSLDVKY) the chain is Extracellular. Residues 307 to 327 (ILMISYFFIPLHGCMNAVCFG) form a helical membrane-spanning segment. The Cytoplasmic segment spans residues 328 to 515 (VNDRLRMNLK…FCTIDEDETK (188 aa)). Residues 362–375 (NGNNKNNKNNNGAN) show a composition bias toward low complexity. 2 disordered regions span residues 362–409 (NGNN…YYQI) and 469–515 (NNNN…DETK). Positions 385–396 (SPDDDDDEDDDN) are enriched in acidic residues. 2 stretches are compositionally biased toward low complexity: residues 397 to 407 (NNNNYSDGNYY) and 469 to 504 (NNNN…NNNN).

It belongs to the G-protein coupled receptor 5 family.

The protein resides in the membrane. Functionally, receptor for cAMP. This chain is Cyclic AMP receptor-like protein G (crlG), found in Dictyostelium discoideum (Social amoeba).